Reading from the N-terminus, the 183-residue chain is Peptide deformylase (183 aa).

Residues C110 and H153 each coordinate Fe cation. E154 is a catalytic residue. H157 contributes to the Fe cation binding site.

The protein belongs to the polypeptide deformylase family. Fe(2+) serves as cofactor.

The catalysed reaction is N-terminal N-formyl-L-methionyl-[peptide] + H2O = N-terminal L-methionyl-[peptide] + formate. Removes the formyl group from the N-terminal Met of newly synthesized proteins. Requires at least a dipeptide for an efficient rate of reaction. N-terminal L-methionine is a prerequisite for activity but the enzyme has broad specificity at other positions. This chain is Peptide deformylase, found in Listeria monocytogenes serovar 1/2a (strain ATCC BAA-679 / EGD-e).